The following is a 384-amino-acid chain: Spermidine/putrescine import ATP-binding protein PotA (384 aa).

One can recognise an ABC transporter domain in the interval 6–238 (ITFNNVSKTF…PINHFVANFI (233 aa)). An ATP-binding site is contributed by 40-47 (GASGSGKS).

This sequence belongs to the ABC transporter superfamily. Spermidine/putrescine importer (TC 3.A.1.11.1) family. As to quaternary structure, the complex is composed of two ATP-binding proteins (PotA), two transmembrane proteins (PotB and PotC) and a solute-binding protein (PotD).

The protein localises to the cell membrane. It catalyses the reaction ATP + H2O + polyamine-[polyamine-binding protein]Side 1 = ADP + phosphate + polyamineSide 2 + [polyamine-binding protein]Side 1.. Its function is as follows. Part of the ABC transporter complex PotABCD involved in spermidine/putrescine import. Responsible for energy coupling to the transport system. In Streptococcus pyogenes serotype M28 (strain MGAS6180), this protein is Spermidine/putrescine import ATP-binding protein PotA.